The chain runs to 117 residues: MTRIKRGYIARRRRTKLRLFASSFRGAHSRLTRTMTQQRIRALVSAHRDRGKRKRDFRRLWITRINAVIHEMGVFYSYNEFIHNLYKKQLLLNRKILAQIALLNRSCLYTISNDIKK.

This sequence belongs to the bacterial ribosomal protein bL20 family.

The protein resides in the plastid. It is found in the chloroplast. Binds directly to 23S ribosomal RNA and is necessary for the in vitro assembly process of the 50S ribosomal subunit. It is not involved in the protein synthesizing functions of that subunit. This is Large ribosomal subunit protein bL20c (rpl20) from Arabidopsis thaliana (Mouse-ear cress).